Reading from the N-terminus, the 166-residue chain is Ubiquitin-conjugating enzyme E2-18 kDa (166 aa).

A UBC core domain is found at 5 to 165 (MALRRLMKEY…VRRLARKTLG (161 aa)). Residue Cys-90 is the Glycyl thioester intermediate of the active site. Cys-90 is covalently cross-linked (Glycyl cysteine thioester (Cys-Gly) (interchain with G-Cter in ubiquitin)).

This sequence belongs to the ubiquitin-conjugating enzyme family. In terms of processing, autoubiquitinated at Cys-90; undergoes 'Lys-48'-linked polyubiquitination, which leads to proteasome-dependent protein degradation.

It carries out the reaction S-ubiquitinyl-[E1 ubiquitin-activating enzyme]-L-cysteine + [E2 ubiquitin-conjugating enzyme]-L-cysteine = [E1 ubiquitin-activating enzyme]-L-cysteine + S-ubiquitinyl-[E2 ubiquitin-conjugating enzyme]-L-cysteine.. It functions in the pathway protein modification; protein ubiquitination. Catalyzes the covalent attachment of ubiquitin to other proteins. Functions in degradation of misfolded or regulated proteins localized in the endoplasmic reticulum (ER) lumen or membrane via the ubiquitin-proteasome system. Cognate E2 conjugating enzyme for the doa10 ubiquitin ligase complex, which is part of the ERAD-C pathway responsible for the rapid degradation of membrane proteins with misfolded cytoplasmic domains, and of the hrd1 ubiquitin ligase complex, which is part of the ERAD-L and ERAD-M pathways responsible for the rapid degradation of soluble lumenal and membrane proteins with misfolded lumenal domains (ERAD-L), or ER-membrane proteins with misfolded transmembrane domains (ERAD-M). Together with hrd1, required for the degradation of the transcription factor sre1 precursor in the absence of its binding partner scp1. Has a role in the formation of chromatin structures that influence the localization of transcriptional silencing factors. The sequence is that of Ubiquitin-conjugating enzyme E2-18 kDa (ubc7) from Schizosaccharomyces pombe (strain 972 / ATCC 24843) (Fission yeast).